Reading from the N-terminus, the 150-residue chain is D-aminoacyl-tRNA deacylase (150 aa).

Residues 137–138 carry the Gly-cisPro motif, important for rejection of L-amino acids motif; sequence GP.

Belongs to the DTD family. Homodimer.

Its subcellular location is the cytoplasm. It catalyses the reaction glycyl-tRNA(Ala) + H2O = tRNA(Ala) + glycine + H(+). The enzyme catalyses a D-aminoacyl-tRNA + H2O = a tRNA + a D-alpha-amino acid + H(+). Functionally, an aminoacyl-tRNA editing enzyme that deacylates mischarged D-aminoacyl-tRNAs. Also deacylates mischarged glycyl-tRNA(Ala), protecting cells against glycine mischarging by AlaRS. Acts via tRNA-based rather than protein-based catalysis; rejects L-amino acids rather than detecting D-amino acids in the active site. By recycling D-aminoacyl-tRNA to D-amino acids and free tRNA molecules, this enzyme counteracts the toxicity associated with the formation of D-aminoacyl-tRNA entities in vivo and helps enforce protein L-homochirality. This chain is D-aminoacyl-tRNA deacylase, found in Geotalea daltonii (strain DSM 22248 / JCM 15807 / FRC-32) (Geobacter daltonii).